A 1276-amino-acid polypeptide reads, in one-letter code: Probable histone acetyltransferase HAC-like 3 (1276 aa).

Residues 391–421 are disordered; the sequence is VDRAEQTSNSTVSKPTSPASDGSSGKHYPAK. Over residues 396–413 the composition is skewed to polar residues; that stretch reads QTSNSTVSKPTSPASDGS. The segment at 621-689 adopts a PHD-type zinc-finger fold; that stretch reads SSICGRCHHL…EYTCAKCFLK (69 aa). Residues 704–1130 enclose the CBP/p300-type HAT domain; the sequence is ILGARELPRT…ILYHLHDSTC (427 aa). Acetyl-CoA contacts are provided by residues 827–829, 846–847, and Trp-902; these read IDS and RT. Residues 953-973 are a coiled coil; sequence EAERLLEKKDDDTSQKKETQL. 2 ZZ-type zinc fingers span residues 1013–1076 and 1125–1187; these read CLQQ…EEPL and LHDS…LQDY. Residues Cys-1018, Cys-1021, Cys-1033, Cys-1036, Cys-1042, Cys-1045, His-1058, His-1066, Cys-1130, Cys-1133, Cys-1145, Cys-1148, Cys-1154, Cys-1157, His-1168, and His-1177 each contribute to the Zn(2+) site. The TAZ-type zinc finger occupies 1177 to 1260; that stretch reads HVLQKYTLQD…DCSAPRCRDI (84 aa).

It is found in the nucleus. The enzyme catalyses L-lysyl-[protein] + acetyl-CoA = N(6)-acetyl-L-lysyl-[protein] + CoA + H(+). Functionally, acetyltransferase enzyme. Acetylates histones, giving a specific tag for transcriptional activation. The polypeptide is Probable histone acetyltransferase HAC-like 3 (Oryza sativa subsp. japonica (Rice)).